The following is a 953-amino-acid chain: UvrABC system protein A (953 aa).

33–40 (GLSGSGKS) provides a ligand contact to ATP. ABC transporter domains lie at 320 to 599 (WGST…EESI) and 619 to 949 (GHDN…RYLK). Residue 652–659 (GVSGSGKS) participates in ATP binding. The C4-type zinc-finger motif lies at 752–778 (CEACQGDGLIKIEMHFLPDVYVKCDIC).

It belongs to the ABC transporter superfamily. UvrA family. In terms of assembly, forms a heterotetramer with UvrB during the search for lesions.

The protein resides in the cytoplasm. The UvrABC repair system catalyzes the recognition and processing of DNA lesions. UvrA is an ATPase and a DNA-binding protein. A damage recognition complex composed of 2 UvrA and 2 UvrB subunits scans DNA for abnormalities. When the presence of a lesion has been verified by UvrB, the UvrA molecules dissociate. The chain is UvrABC system protein A from Rickettsia bellii (strain RML369-C).